The following is a 210-amino-acid chain: Inner membrane-spanning protein YciB (210 aa).

The next 6 membrane-spanning stretches (helical) occupy residues 19–39 (LVLE…GDWL), 53–73 (IFIA…VSWI), 78–98 (LPMM…LTLW), 115–135 (LFGA…GYVF), 148–168 (KLTI…EIVW), and 175–195 (FWVA…TLAQ).

The protein belongs to the YciB family.

The protein resides in the cell inner membrane. In terms of biological role, plays a role in cell envelope biogenesis, maintenance of cell envelope integrity and membrane homeostasis. The protein is Inner membrane-spanning protein YciB of Sinorhizobium fredii (strain NBRC 101917 / NGR234).